The following is a 444-amino-acid chain: Phosphoglucosamine mutase (444 aa).

Catalysis depends on serine 102, which acts as the Phosphoserine intermediate. Residues serine 102, aspartate 241, aspartate 243, and aspartate 245 each coordinate Mg(2+). At serine 102 the chain carries Phosphoserine.

The protein belongs to the phosphohexose mutase family. It depends on Mg(2+) as a cofactor. Post-translationally, activated by phosphorylation.

It carries out the reaction alpha-D-glucosamine 1-phosphate = D-glucosamine 6-phosphate. Functionally, catalyzes the conversion of glucosamine-6-phosphate to glucosamine-1-phosphate. The chain is Phosphoglucosamine mutase from Actinobacillus pleuropneumoniae serotype 5b (strain L20).